We begin with the raw amino-acid sequence, 895 residues long: Serine/threonine-protein kinase-like protein ACR4 (895 aa).

An N-terminal signal peptide occupies residues 1 to 29; sequence MRMFETRAREWILLVKLVLFTSIWQLASA. Residues 30-434 are Extracellular-facing; the sequence is LGSMSSIAIS…FWSLQLPIAT (405 aa). Tandem repeats lie at residues 38 to 73, 77 to 112, 130 to 167, 169 to 202, 210 to 245, 262 to 296, and 301 to 339. The tract at residues 38-339 is 7 X 36 AA repeats; that stretch reads ISYGEGGSVF…PASIPLAVSP (302 aa). Residues Asn-158 and Asn-196 are each glycosylated (N-linked (GlcNAc...) asparagine). The N-linked (GlcNAc...) asparagine glycan is linked to Asn-290. The TNFR-Cys repeat unit spans residues 346–395; sequence PCPPGTHELSNQENSPCKFTGSHICLPCSTSCPPGMYQKSVCTERSDQVC. Disulfide bonds link Cys-347–Cys-370, Cys-373–Cys-387, and Cys-377–Cys-395. N-linked (GlcNAc...) asparagine glycosylation is found at Asn-398 and Asn-410. Residues 435-455 traverse the membrane as a helical segment; sequence AEIGFALFLVAVVSITAALYI. Over 456–895 the chain is Cytoplasmic; the sequence is RYRLRNCRCS…GQSLFLHHNF (440 aa). Ser-475 carries the phosphoserine modification. A Protein kinase domain is found at 512 to 789; sequence FKEESIVGKG…KVTTALERAL (278 aa). ATP contacts are provided by residues 518-526 and Lys-540; that span reads VGKGSFSCV. The active-site Proton acceptor is the Asp-641. The interval 818–895 is disordered; that stretch reads SWRIGSKRSG…GQSLFLHHNF (78 aa). Basic and acidic residues predominate over residues 865-877; the sequence is EGRKQQEALRSLE.

The protein belongs to the protein kinase superfamily. Ser/Thr protein kinase family. As to quaternary structure, homodimer. Interacts with PP2A3. Autophosphorylated and phosphorylated by ALE2. As to expression, expressed in seedlings, floral buds, siliques, leaves, shoot apical meristems (SAM), and, to a lower extent, in roots.

It is found in the cell membrane. It localises to the endosome. Its subcellular location is the multivesicular body membrane. It catalyses the reaction L-seryl-[protein] + ATP = O-phospho-L-seryl-[protein] + ADP + H(+). It carries out the reaction L-threonyl-[protein] + ATP = O-phospho-L-threonyl-[protein] + ADP + H(+). In terms of biological role, controls formative cell division in meristems, including root tips and lateral root initiation zones of the pericycle, in response to CLE40 signal. Acts with CLE40p peptide as a ligand-receptor pair in a signal transduction pathway, coordinating movement of the root tip and organization of cell divisions in the root meristem. Required during embryogenesis and development, probably for the differentiation of protoderm and epidermal cells. Involved in the regulation of cellular organization during the development of sepal margins and ovule integument outgrowth and promotes giant cell formation. Can phosphorylate ALE2. The chain is Serine/threonine-protein kinase-like protein ACR4 from Arabidopsis thaliana (Mouse-ear cress).